A 488-amino-acid chain; its full sequence is Aspartyl/glutamyl-tRNA(Asn/Gln) amidotransferase subunit B (488 aa).

It belongs to the GatB/GatE family. GatB subfamily. In terms of assembly, heterotrimer of A, B and C subunits.

The enzyme catalyses L-glutamyl-tRNA(Gln) + L-glutamine + ATP + H2O = L-glutaminyl-tRNA(Gln) + L-glutamate + ADP + phosphate + H(+). The catalysed reaction is L-aspartyl-tRNA(Asn) + L-glutamine + ATP + H2O = L-asparaginyl-tRNA(Asn) + L-glutamate + ADP + phosphate + 2 H(+). Its function is as follows. Allows the formation of correctly charged Asn-tRNA(Asn) or Gln-tRNA(Gln) through the transamidation of misacylated Asp-tRNA(Asn) or Glu-tRNA(Gln) in organisms which lack either or both of asparaginyl-tRNA or glutaminyl-tRNA synthetases. The reaction takes place in the presence of glutamine and ATP through an activated phospho-Asp-tRNA(Asn) or phospho-Glu-tRNA(Gln). The protein is Aspartyl/glutamyl-tRNA(Asn/Gln) amidotransferase subunit B of Ralstonia pickettii (strain 12J).